A 312-amino-acid polypeptide reads, in one-letter code: Fasciclin-like arabinogalactan protein elcF (312 aa).

Positions 1 to 16 (MKLFTLLLPALTSAHS) are cleaved as a signal peptide. 2 FAS1 domains span residues 17–160 (LSTL…NASM) and 162–289 (LPHN…DKVL). N-linked (GlcNAc...) asparagine glycans are attached at residues N48, N68, N113, N157, and N165.

The protein belongs to the fasciclin-like AGP family.

It participates in secondary metabolite biosynthesis. Fasciclin-like arabinogalactan protein; part of the gene cluster that mediates the biosynthesis of elsinochrome C, a perelyenequinone phytotoxin structurally similar to cercosporin. The first step of elsinochrome C biosynthesis is performed by the polyketide synthase elcA which catalyzes the formation of nor-toralactone. The starter unit acyltransferase (SAT) domain of elcA initiates polyketide extension by the selective utilization of acetyl-CoA, which is elongated to the heptaketide in the beta-ketoacyl synthase (KS) domain by successive condensations with six malonyl units introduced by the malonyl acyltransferase (MAT) domain. The product template (PT) domain catalyzes C4-C9 and C2-C11 aldol cyclizations and dehydrations to a trihydroxynaphthalene, which is thought to be delivered to the thioesterase (TE) domain for product release. The bifunctional enzyme elcB then methylates nor-toralactone to toralactone before conducting an unusual oxidative aromatic ring opening. The next step in perylenequinone biosynthesis is an O-methylation at the nascent OH-6 of the elcB product performed by the O-methyltransferase elcD. The oxidative coupling of the two monomeric naphthol units in perylenequinone biosynthesis is catalyzed by the FAD-dependent monooxygenase elcE and the multicopper oxidase elcG. ElcG might catalyze the first intermolecular coupling in a regio- and stereo-selective manner via a phenol radical coupling mechanism and the elcE could forge the second C-C bond intramolecularly via a hydride transfer mechanism. The fasciclin domain-containing protein elcF might also play a role duting this step. The last piece of the puzzle in the biosynthesis of elsinochrome C is the additional annulation by enolate coupling to afford the dihydrobenzo(ghi)perylenequinone system, catalyzed by the FAD-dependent monooxygenase elcH. The protein is Fasciclin-like arabinogalactan protein elcF of Phaeosphaeria nodorum (strain SN15 / ATCC MYA-4574 / FGSC 10173) (Glume blotch fungus).